The primary structure comprises 259 residues: Polycomb group RING finger protein 1 (259 aa).

The segment at 45–84 (CYLCAGYFIDATTITECLHTFCKSCIVKYLQTSKYCPLCN) adopts an RING-type zinc-finger fold.

As to quaternary structure, component of a PRC1-like complex.

The protein localises to the nucleus. Component of a Polycomb group (PcG) multiprotein PRC1-like complex, a complex class required to maintain the transcriptionally repressive state of many genes, including Hox genes, throughout development. PcG PRC1 complex acts via chromatin remodeling and modification of histones; it mediates monoubiquitination of histone H2A 'Lys-119', rendering chromatin heritably changed in its expressibility. The polypeptide is Polycomb group RING finger protein 1 (pcgf1) (Xenopus tropicalis (Western clawed frog)).